A 269-amino-acid chain; its full sequence is Surfeit locus protein 4 (269 aa).

Transmembrane regions (helical) follow at residues 64–84 (FLAT…CVLI), 92–112 (YACF…SILW), 179–199 (FFSI…AIGF), 203–223 (LAAL…NAFW), and 242–262 (TTSV…GVSM). Residues 266–269 (KKEW) carry the Di-lysine motif motif.

This sequence belongs to the SURF4 family.

The protein localises to the endoplasmic reticulum membrane. It localises to the endoplasmic reticulum-Golgi intermediate compartment membrane. Its subcellular location is the golgi apparatus membrane. Its function is as follows. Endoplasmic reticulum cargo receptor that mediates the export of lipoproteins by recruiting cargos into COPII vesicles to facilitate their secretion. Acts as a cargo receptor for lipoproteins bearing both APOB and APOA1, thereby regulating lipoprotein delivery and the maintenance of lipid homeostasis. In Takifugu rubripes (Japanese pufferfish), this protein is Surfeit locus protein 4.